A 785-amino-acid polypeptide reads, in one-letter code: Phenylalanine--tRNA ligase beta subunit (785 aa).

The tRNA-binding domain maps to 39 to 147 (FPIPRGVVFA…DALPPGTPLS (109 aa)). The 76-residue stretch at 399-474 (KPPEAIPFRP…RIQGYETIPL (76 aa)) folds into the B5 domain. Aspartate 452, aspartate 458, glutamate 461, and glutamate 462 together coordinate Mg(2+). The region spanning 688-780 (SRHPAAFRDL…ALRARGFGLR (93 aa)) is the FDX-ACB domain.

It belongs to the phenylalanyl-tRNA synthetase beta subunit family. Type 1 subfamily. Tetramer of two alpha and two beta subunits. Mg(2+) is required as a cofactor.

It is found in the cytoplasm. It carries out the reaction tRNA(Phe) + L-phenylalanine + ATP = L-phenylalanyl-tRNA(Phe) + AMP + diphosphate + H(+). This Thermus thermophilus (strain ATCC 27634 / DSM 579 / HB8) protein is Phenylalanine--tRNA ligase beta subunit (pheT).